The sequence spans 92 residues: mRNA interferase toxin YafQ (92 aa).

His-87 serves as the catalytic Proton donor.

This sequence belongs to the RelE toxin family. YafQ subfamily. As to quaternary structure, monomer in solution, forms a heterotetramer with antitoxin DinJ, with 2 YafQ-DinJ dimers associated via the N-terminus of the DinJ antitoxins (YafQ-(DinJ)2-YafQ).

Functionally, toxic component of a type II toxin-antitoxin (TA) system. A sequence-specific mRNA endoribonuclease that inhibits translation elongation and induces bacterial stasis. Cleavage occurs between the second and third residue of the Lys codon followed by a G or A (5'AAA(G/A)3'), is reading-frame dependent and occurs within the 5' end of most mRNAs. Ribosome-binding confers the sequence specificity and reading frame-dependence. The YafQ-DinJ heterotetramer binds the consensus sequence 5'-TTTGAGCTACA-3' in the dinJ promoter; DinJ also binds DNA but not as well as the YafQ-DinJ complex. This chain is mRNA interferase toxin YafQ (yafQ), found in Escherichia coli (strain B / BL21-DE3).